Reading from the N-terminus, the 522-residue chain is Gypsy retrotransposon integrase-like protein 1 (522 aa).

The Integrase catalytic domain occupies 135–292 (KVENPWSLVT…TPYFQMFSRN (158 aa)).

This is Gypsy retrotransposon integrase-like protein 1 (GIN1) from Macaca fascicularis (Crab-eating macaque).